The sequence spans 124 residues: Small ribosomal subunit protein uS12 (124 aa).

Position 89 is a 3-methylthioaspartic acid (D89).

The protein belongs to the universal ribosomal protein uS12 family. In terms of assembly, part of the 30S ribosomal subunit. Contacts proteins S8 and S17. May interact with IF1 in the 30S initiation complex.

With S4 and S5 plays an important role in translational accuracy. In terms of biological role, interacts with and stabilizes bases of the 16S rRNA that are involved in tRNA selection in the A site and with the mRNA backbone. Located at the interface of the 30S and 50S subunits, it traverses the body of the 30S subunit contacting proteins on the other side and probably holding the rRNA structure together. The combined cluster of proteins S8, S12 and S17 appears to hold together the shoulder and platform of the 30S subunit. This chain is Small ribosomal subunit protein uS12, found in Shewanella piezotolerans (strain WP3 / JCM 13877).